The chain runs to 255 residues: Thiazole synthase (255 aa).

Residue K95 is the Schiff-base intermediate with DXP of the active site. 1-deoxy-D-xylulose 5-phosphate is bound by residues G156, 182–183 (AG), and 204–205 (NT).

This sequence belongs to the ThiG family. As to quaternary structure, homotetramer. Forms heterodimers with either ThiH or ThiS.

It localises to the cytoplasm. The catalysed reaction is [ThiS sulfur-carrier protein]-C-terminal-Gly-aminoethanethioate + 2-iminoacetate + 1-deoxy-D-xylulose 5-phosphate = [ThiS sulfur-carrier protein]-C-terminal Gly-Gly + 2-[(2R,5Z)-2-carboxy-4-methylthiazol-5(2H)-ylidene]ethyl phosphate + 2 H2O + H(+). It functions in the pathway cofactor biosynthesis; thiamine diphosphate biosynthesis. Its function is as follows. Catalyzes the rearrangement of 1-deoxy-D-xylulose 5-phosphate (DXP) to produce the thiazole phosphate moiety of thiamine. Sulfur is provided by the thiocarboxylate moiety of the carrier protein ThiS. In vitro, sulfur can be provided by H(2)S. The polypeptide is Thiazole synthase (Photorhabdus laumondii subsp. laumondii (strain DSM 15139 / CIP 105565 / TT01) (Photorhabdus luminescens subsp. laumondii)).